The following is a 92-amino-acid chain: Small ribosomal subunit protein uS19c (92 aa).

This sequence belongs to the universal ribosomal protein uS19 family.

Its subcellular location is the plastid. The protein localises to the chloroplast. In terms of biological role, protein S19 forms a complex with S13 that binds strongly to the 16S ribosomal RNA. The protein is Small ribosomal subunit protein uS19c of Staurastrum punctulatum (Green alga).